Here is a 420-residue protein sequence, read N- to C-terminus: UDP-N-acetylglucosamine 1-carboxyvinyltransferase (420 aa).

22-23 is a binding site for phosphoenolpyruvate; that stretch reads KN. R91 is a UDP-N-acetyl-alpha-D-glucosamine binding site. The Proton donor role is filled by C115. C115 carries the 2-(S-cysteinyl)pyruvic acid O-phosphothioketal modification. Residues 120-124, 160-163, D305, and I327 contribute to the UDP-N-acetyl-alpha-D-glucosamine site; these read RPVDL and KVSV.

It belongs to the EPSP synthase family. MurA subfamily.

It is found in the cytoplasm. The catalysed reaction is phosphoenolpyruvate + UDP-N-acetyl-alpha-D-glucosamine = UDP-N-acetyl-3-O-(1-carboxyvinyl)-alpha-D-glucosamine + phosphate. Its pathway is cell wall biogenesis; peptidoglycan biosynthesis. In terms of biological role, cell wall formation. Adds enolpyruvyl to UDP-N-acetylglucosamine. This Pectobacterium atrosepticum (strain SCRI 1043 / ATCC BAA-672) (Erwinia carotovora subsp. atroseptica) protein is UDP-N-acetylglucosamine 1-carboxyvinyltransferase.